Here is a 471-residue protein sequence, read N- to C-terminus: P2X purinoceptor 2 (471 aa).

Topologically, residues 1 to 42 (MAAAQPKYPAGATARRLARGCWSALWDYETPKVIVVRNRRLG) are cytoplasmic. Cystine bridges form between Cys21–Cys439, Cys125–Cys176, Cys136–Cys159, Cys142–Cys170, Cys226–Cys236, and Cys270–Cys279. A helical transmembrane segment spans residues 43-63 (VLYRAVQLLILLYFVWYVFIV). The Extracellular segment spans residues 64 to 337 (QKSYQESETG…IVHGQAGKFS (274 aa)). The ATP site is built by Lys81 and Lys83. Asn133 carries an N-linked (GlcNAc...) asparagine glycan. A glycan (N-linked (GlcNAc...) asparagine) is linked at Asn194. Thr196 contacts ATP. Residues Ser296, Asn300, and Arg302 each contribute to the ATP site. Asn310 carries N-linked (GlcNAc...) asparagine glycosylation. An ATP-binding site is contributed by Lys319. Residues 320–333 (AYGIRIDVIVHGQA) form a pore-forming motif region. A helical transmembrane segment spans residues 338 to 358 (LIPTIINLATALTSVGVGSFL). The Cytoplasmic segment spans residues 359-471 (CDWILLTFMN…PTDPKGLAQL (113 aa)). A disordered region spans residues 400-471 (GQAPPEPGHR…PTDPKGLAQL (72 aa)).

This sequence belongs to the P2X receptor family. As to quaternary structure, homotrimer and heterotrimer; functional P2XRs are organized as homomeric and heteromeric trimers. Homotrimer. Forms heterotrimer with P2RX1. Forms heterotrimer with P2RX6. Forms heterotrimer with P2RX3. Expressed in both the central and peripheral nervous system, as well as in the pituitary gland.

It localises to the cell membrane. The enzyme catalyses Ca(2+)(in) = Ca(2+)(out). It carries out the reaction K(+)(in) = K(+)(out). It catalyses the reaction Na(+)(in) = Na(+)(out). Fast activation by external ATP. Exhibits slow desensitization during prolonged ATP activation. Not sensitive to the ATP agonist:alpha/beta-methylene-ATP. Its function is as follows. ATP-gated nonselective transmembrane cation channel permeable to potassium, sodium and calcium. Activation by extracellular ATP induces a variety of cellular responses, such as excitatory postsynaptic responses in sensory neurons, neuromuscular junctions (NMJ) formation, hearing, perception of taste and peristalsis. In the inner ear, regulates sound transduction and auditory neurotransmission, outer hair cell electromotility, inner ear gap junctions, and K(+) recycling. Mediates synaptic transmission between neurons and from neurons to smooth muscle. This is P2X purinoceptor 2 from Homo sapiens (Human).